The chain runs to 66 residues: Conotoxin Bu1.4 (66 aa).

Residues 1–23 (MGMRMRMMFTVFLLVVLANTVVS) form the signal peptide. A propeptide spanning residues 24-46 (FPSDRDSDGADAEASDEPVEFER) is cleaved from the precursor. The interval 25–48 (PSDRDSDGADAEASDEPVEFERDE) is disordered. Residues 32 to 42 (GADAEASDEPV) are compositionally biased toward acidic residues. 2 disulfide bridges follow: Cys-51–Cys-57 and Cys-52–Cys-62. Residue Thr-63 is modified to Threonine amide.

The protein belongs to the conotoxin A superfamily. In terms of tissue distribution, expressed by the venom duct.

The protein resides in the secreted. The sequence is that of Conotoxin Bu1.4 from Conus bullatus (Bubble cone).